A 63-amino-acid polypeptide reads, in one-letter code: Toxin S6C6 (63 aa).

Disulfide bonds link cysteine 3–cysteine 24, cysteine 6–cysteine 11, cysteine 17–cysteine 39, cysteine 43–cysteine 55, and cysteine 56–cysteine 61.

Belongs to the three-finger toxin family. Ancestral subfamily. Orphan group XIX sub-subfamily. As to expression, expressed by the venom gland.

It is found in the secreted. In terms of biological role, may enhance presynaptic acetylcholine release. The polypeptide is Toxin S6C6 (Dendroaspis jamesoni kaimosae (Eastern Jameson's mamba)).